Reading from the N-terminus, the 626-residue chain is ATP-dependent rRNA helicase SPB4 (626 aa).

The short motif at 3–31 (TDWKDLPVAPWLIDTMEQFGFTDMTPVQA) is the Q motif element. The Helicase ATP-binding domain maps to 34–239 (IPMFAGNKDV…KIGLRNPVKI (206 aa)). An ATP-binding site is contributed by 47–54 (AVTGSGKT). The DEAD box motif lies at 187–190 (DEAD). Positions 273-437 (NLLSIYPYRK…EATELYTKLR (165 aa)) constitute a Helicase C-terminal domain. Residues 523–604 (AKEEARLKEL…KQEESKEVVN (82 aa)) are a coiled coil. The segment at 549–626 (KNDVQKANRA…KVDLPTFDDL (78 aa)) is disordered. Residues 579–611 (RINEKIKRDFEEAKDLKQEESKEVVNDWKDMVK) are compositionally biased toward basic and acidic residues.

It belongs to the DEAD box helicase family. DDX55/SPB4 subfamily.

The protein localises to the nucleus. The protein resides in the nucleolus. Its function is as follows. ATP-binding RNA helicase involved in the biogenesis of 60S ribosomal subunits. Required for the normal formation of 18S rRNA through the processing of pre-rRNAs at sites A0, A1 and A2, and the normal formation of 25S and 5.8S rRNAs through the processing of pre-rRNAs at sites C1 and C2. This is ATP-dependent rRNA helicase SPB4 (SPB4) from Yarrowia lipolytica (strain CLIB 122 / E 150) (Yeast).